A 90-amino-acid chain; its full sequence is Caspase recruitment domain-containing protein 18 (90 aa).

A CARD domain is found at 1–90; sequence MADQLLRKKR…PQLASKMGLH (90 aa).

Interacts with pro-CASP1. Interacts with CARD8. As to expression, primarily expressed in the heart and placenta.

In terms of biological role, inhibits generation of IL-1-beta by interacting with caspase-1 and preventing its association with RIP2. Down-regulates the release of IL1B. The protein is Caspase recruitment domain-containing protein 18 (CARD18) of Homo sapiens (Human).